We begin with the raw amino-acid sequence, 457 residues long: Phosphomethylpyrimidine synthase (457 aa).

Substrate-binding positions include N80, M109, Y139, H175, 195-197, 236-239, and E275; these read SRG and DSLR. Residue H279 coordinates Zn(2+). Y302 is a substrate binding site. H343 is a Zn(2+) binding site. 3 residues coordinate [4Fe-4S] cluster: C423, C426, and C431.

Belongs to the ThiC family. Requires [4Fe-4S] cluster as cofactor.

It catalyses the reaction 5-amino-1-(5-phospho-beta-D-ribosyl)imidazole + S-adenosyl-L-methionine = 4-amino-2-methyl-5-(phosphooxymethyl)pyrimidine + CO + 5'-deoxyadenosine + formate + L-methionine + 3 H(+). The protein operates within cofactor biosynthesis; thiamine diphosphate biosynthesis. In terms of biological role, catalyzes the synthesis of the hydroxymethylpyrimidine phosphate (HMP-P) moiety of thiamine from aminoimidazole ribotide (AIR) in a radical S-adenosyl-L-methionine (SAM)-dependent reaction. The sequence is that of Phosphomethylpyrimidine synthase from Nostoc sp. (strain PCC 7120 / SAG 25.82 / UTEX 2576).